Here is a 239-residue protein sequence, read N- to C-terminus: ATP-dependent dethiobiotin synthetase BioD (239 aa).

An ATP-binding site is contributed by Glu-13–Val-18. Thr-17 serves as a coordination point for Mg(2+). Lys-38 is an active-site residue. Thr-42 provides a ligand contact to substrate. The Mg(2+) site is built by Lys-59 and Glu-111. ATP is bound by residues Glu-111–Gly-114, Asn-175–Gln-176, and Pro-204–Leu-206.

This sequence belongs to the dethiobiotin synthetase family. As to quaternary structure, homodimer. Requires Mg(2+) as cofactor.

It is found in the cytoplasm. It catalyses the reaction (7R,8S)-7,8-diammoniononanoate + CO2 + ATP = (4R,5S)-dethiobiotin + ADP + phosphate + 3 H(+). The protein operates within cofactor biosynthesis; biotin biosynthesis; biotin from 7,8-diaminononanoate: step 1/2. Its function is as follows. Catalyzes a mechanistically unusual reaction, the ATP-dependent insertion of CO2 between the N7 and N8 nitrogen atoms of 7,8-diaminopelargonic acid (DAPA, also called 7,8-diammoniononanoate) to form a ureido ring. The chain is ATP-dependent dethiobiotin synthetase BioD from Geobacillus sp. (strain WCH70).